The following is a 97-amino-acid chain: SAGA-associated factor 11 (97 aa).

Residues 70–91 (IECNVCGREVSGNRFAAHLVRC) form an SGF11-type zinc finger.

It belongs to the SGF11 family. As to quaternary structure, component of the 1.8 MDa SAGA transcription coactivator-HAT complex. SAGA is built of 5 distinct domains with specialized functions. Within the SAGA complex, SUS1, SGF11, SGF73 and UBP8 form an additional subcomplex of SAGA called the DUB module (deubiquitination module). Interacts directly with SGF73, SUS1 and UBP8.

Its subcellular location is the nucleus. Functions as a component of the transcription regulatory histone acetylation (HAT) complex SAGA. At the promoters, SAGA is required for recruitment of the basal transcription machinery. It influences RNA polymerase II transcriptional activity through different activities such as TBP interaction and promoter selectivity, interaction with transcription activators, and chromatin modification through histone acetylation and deubiquitination. SAGA acetylates nucleosomal histone H3 to some extent (to form H3K9ac, H3K14ac, H3K18ac and H3K23ac). SAGA interacts with DNA via upstream activating sequences (UASs). Involved in transcriptional regulation of a subset of SAGA-regulated genes. Within the SAGA complex, participates in a subcomplex, that specifically deubiquitinates histones H2B. The polypeptide is SAGA-associated factor 11 (Kluyveromyces lactis (strain ATCC 8585 / CBS 2359 / DSM 70799 / NBRC 1267 / NRRL Y-1140 / WM37) (Yeast)).